Reading from the N-terminus, the 449-residue chain is tRNA-2-methylthio-N(6)-dimethylallyladenosine synthase (449 aa).

The MTTase N-terminal domain maps to 4 to 119 (RTFHIETFGC…APQALDRLVE (116 aa)). 6 residues coordinate [4Fe-4S] cluster: Cys-13, Cys-48, Cys-82, Cys-158, Cys-162, and Cys-165. The 232-residue stretch at 144–375 (GAVPASVFVN…QTLQNRLTER (232 aa)) folds into the Radical SAM core domain. The TRAM domain maps to 378–446 (QDMVGKKVEV…KHSLLAEQAG (69 aa)).

It belongs to the methylthiotransferase family. MiaB subfamily. In terms of assembly, monomer. [4Fe-4S] cluster serves as cofactor.

It localises to the cytoplasm. It carries out the reaction N(6)-dimethylallyladenosine(37) in tRNA + (sulfur carrier)-SH + AH2 + 2 S-adenosyl-L-methionine = 2-methylsulfanyl-N(6)-dimethylallyladenosine(37) in tRNA + (sulfur carrier)-H + 5'-deoxyadenosine + L-methionine + A + S-adenosyl-L-homocysteine + 2 H(+). Its function is as follows. Catalyzes the methylthiolation of N6-(dimethylallyl)adenosine (i(6)A), leading to the formation of 2-methylthio-N6-(dimethylallyl)adenosine (ms(2)i(6)A) at position 37 in tRNAs that read codons beginning with uridine. This chain is tRNA-2-methylthio-N(6)-dimethylallyladenosine synthase, found in Nitratidesulfovibrio vulgaris (strain DP4) (Desulfovibrio vulgaris).